Reading from the N-terminus, the 360-residue chain is Glutamate 5-kinase (360 aa).

Residue Lys-7 participates in ATP binding. Substrate contacts are provided by Ser-47, Asp-134, and Asn-146. ATP contacts are provided by residues 166-167 and 210-216; these read TD and TGGISTK. The 82-residue stretch at 275 to 356 folds into the PUA domain; the sequence is VGKITLDDGA…SSIIVVHRDV (82 aa).

The protein belongs to the glutamate 5-kinase family.

The protein resides in the cytoplasm. The enzyme catalyses L-glutamate + ATP = L-glutamyl 5-phosphate + ADP. Its pathway is amino-acid biosynthesis; L-proline biosynthesis; L-glutamate 5-semialdehyde from L-glutamate: step 1/2. In terms of biological role, catalyzes the transfer of a phosphate group to glutamate to form L-glutamate 5-phosphate. In Prochlorococcus marinus (strain MIT 9301), this protein is Glutamate 5-kinase.